Here is a 59-residue protein sequence, read N- to C-terminus: UPF0434 protein VV1_2087 (59 aa).

Belongs to the UPF0434 family.

In Vibrio vulnificus (strain CMCP6), this protein is UPF0434 protein VV1_2087.